The sequence spans 378 residues: Beta-1,3-galactosyltransferase pvg3 (378 aa).

Residues 1 to 8 (MFSNSKKK) are Cytoplasmic-facing. Residues 9–29 (IFLYVLIAGVATFSFAFLVLN) traverse the membrane as a helical; Signal-anchor for type II membrane protein segment. The Lumenal segment spans residues 30–378 (RLQAEEHSLA…ATIPLPSLDV (349 aa)). Residues Asn-53, Asn-97, Asn-180, and Asn-354 are each glycosylated (N-linked (GlcNAc...) asparagine).

It belongs to the glycosyltransferase 31 family.

It is found in the endoplasmic reticulum membrane. It localises to the golgi apparatus. The protein resides in the golgi stack membrane. The enzyme catalyses 3-O-(beta-D-galactosyl-(1-&gt;4)-beta-D-xylosyl)-L-seryl-[protein] + UDP-alpha-D-galactose = 3-O-(beta-D-galactosyl-(1-&gt;3)-beta-D-galactosyl-(1-&gt;4)-beta-D-xylosyl)-L-seryl-[protein] + UDP + H(+). Functionally, involved in cell wall biogenesis. Has a role in the addition of Gal-beta1,3 moeities to galactomannans and their subsequent pyruvylation. Has a role in meiosis. The protein is Beta-1,3-galactosyltransferase pvg3 (pvg3) of Schizosaccharomyces pombe (strain 972 / ATCC 24843) (Fission yeast).